The sequence spans 389 residues: Galactose-1-phosphate uridylyltransferase (389 aa).

This sequence belongs to the galactose-1-phosphate uridylyltransferase type 2 family.

It localises to the cytoplasm. The catalysed reaction is alpha-D-galactose 1-phosphate + UDP-alpha-D-glucose = alpha-D-glucose 1-phosphate + UDP-alpha-D-galactose. The protein operates within carbohydrate metabolism; galactose metabolism. This chain is Galactose-1-phosphate uridylyltransferase (galT), found in Butyrivibrio fibrisolvens.